A 473-amino-acid polypeptide reads, in one-letter code: Adenosylhomocysteinase (473 aa).

Residues Thr64, Asp139, and Glu199 each contribute to the substrate site. 200–202 (TTT) lines the NAD(+) pocket. Lys229 and Asp233 together coordinate substrate. NAD(+)-binding positions include Asn234, 263-268 (GYGDVG), Glu286, Asn321, 342-344 (IGH), and Asn387.

It belongs to the adenosylhomocysteinase family. Requires NAD(+) as cofactor.

It is found in the cytoplasm. It catalyses the reaction S-adenosyl-L-homocysteine + H2O = L-homocysteine + adenosine. It functions in the pathway amino-acid biosynthesis; L-homocysteine biosynthesis; L-homocysteine from S-adenosyl-L-homocysteine: step 1/1. In terms of biological role, may play a key role in the regulation of the intracellular concentration of adenosylhomocysteine. The protein is Adenosylhomocysteinase of Paraburkholderia xenovorans (strain LB400).